Consider the following 1072-residue polypeptide: Teashirt homolog 3 (1072 aa).

Disordered stretches follow at residues 44-71 (ACPS…SETS), 130-153 (PSSE…CGSG), and 228-247 (HYRD…WSKP). Over residues 57-71 (SSHEMDSESHISETS) the composition is skewed to basic and acidic residues. C2H2-type zinc fingers lie at residues 204 to 228 (FRCK…ETGH) and 265 to 289 (LKCM…KTKH). A compositionally biased stretch (basic and acidic residues) spans 228–237 (HYRDDNHETD). The tract at residues 315-336 (SLELELPSSPDSTGGTPKATLS) is disordered. The C2H2-type 3; atypical zinc-finger motif lies at 376–400 (LKCMECGSSHDTLQELTAHMMVTGH). A compositionally biased stretch (basic and acidic residues) spans 469 to 481 (AVLDEKPKEKEKA). Disordered stretches follow at residues 469 to 489 (AVLD…EKYD), 569 to 594 (NSEI…PMPK), 616 to 690 (EKMK…PLSG), 784 to 815 (TKGK…TVTT), and 846 to 888 (TESH…RQSN). Composition is skewed to polar residues over residues 571–593 (EIVS…SPMP) and 649–660 (SSGSGFKSQENS). The residue at position 672 (serine 672) is a Phosphoserine. Low complexity-rich tracts occupy residues 791–815 (GCSL…TVTT) and 847–860 (ESHT…SSIS). Residues 882–952 (RKGRQSNWNP…NVKYQLRRTG (71 aa)) constitute a DNA-binding region (homeobox; atypical). C2H2-type zinc fingers lie at residues 967–989 (FFCN…LESH) and 1032–1055 (YQCK…SKTH).

This sequence belongs to the teashirt C2H2-type zinc-finger protein family. As to quaternary structure, interacts (via N-terminus) with HDAC1 and HDAC2; the interaction is direct. Found in a trimeric complex with APBB1 and HDAC1; the interaction between HDAC1 and APBB1 is mediated by TSHZ3. Interacts (via homeobox domain) with APBB1 (via PID domain 1). Expressed in cortical neurons.

It is found in the nucleus. It localises to the cell projection. The protein resides in the growth cone. Its function is as follows. Transcriptional regulator involved in developmental processes. Functions in association with APBB1, SET and HDAC factors as a transcriptional repressor, that inhibits the expression of CASP4. TSHZ3-mediated transcription repression involves the recruitment of histone deacetylases HDAC1 and HDAC2. Associates with chromatin in a region surrounding the CASP4 transcriptional start site(s). Regulates the development of neurons involved in both respiratory rhythm and airflow control. Promotes maintenance of nucleus ambiguus (nA) motoneurons, which govern upper airway function, and establishes a respiratory rhythm generator (RRG) activity compatible with survival at birth. Involved in the differentiation of the proximal uretic smooth muscle cells during developmental processes. Involved in the up-regulation of myocardin, that directs the expression of smooth muscle cells in the proximal ureter. Involved in the modulation of glutamatergic synaptic transmission and long-term synaptic potentiation. This is Teashirt homolog 3 (Tshz3) from Rattus norvegicus (Rat).